Here is a 577-residue protein sequence, read N- to C-terminus: Outer spore wall assembly protein SHE10 (577 aa).

The N-terminal stretch at 1–23 (MGKLIKLITTLTVLVSLLQYCCE) is a signal peptide. Coiled coils occupy residues 379 to 416 (NETR…ENVE) and 513 to 561 (ILRS…EEDV). Positions 525-545 (RERKERERKEREKAAAEEFQR) are enriched in basic and acidic residues. The segment at 525–577 (RERKERERKEREKAAAEEFQRQQELLLQQEEEDEEDVSYTSTSTITTTTTMTL) is disordered. A compositionally biased stretch (low complexity) spans 562–577 (SYTSTSTITTTTTMTL).

Belongs to the SHE10 family. As to quaternary structure, component of the mitochondria-localized RNase mitochondrial RNA-processing (RNase MRP) composed of one single RNA encoded by the NME1 gene and at least 31 proteins. Absent in the nucleus-localized RNase MRP (NuMRP).

The protein localises to the mitochondrion. Its function is as follows. Involved in spore wall assembly. May be a component of the mitochondrial RNase MRP (MtMRP), a ribonucleoprotein endoribonuclease involved in the cleaving RNA transcripts to generate primers for DNA replication in mitochondria. This is Outer spore wall assembly protein SHE10 from Saccharomyces cerevisiae (strain JAY291) (Baker's yeast).